A 382-amino-acid polypeptide reads, in one-letter code: Anthranilate O-methyltransferase 1 (382 aa).

Y20 is a binding site for S-adenosyl-L-homocysteine. Q27 contacts anthranilate. Residues C61, N66, D102, L103, S146, and Y147 each contribute to the S-adenosyl-L-homocysteine site. W168 provides a ligand contact to anthranilate. The Mg(2+) site is built by E268 and F270.

This sequence belongs to the methyltransferase superfamily. Type-7 methyltransferase family. SABATH subfamily.

It carries out the reaction anthranilate + S-adenosyl-L-methionine = O-methyl anthranilate + S-adenosyl-L-homocysteine. Methyltransferase involved in the biosynthesis of methyl anthranilate in response to stresses. Utilizes anthranilic acid as substrate, but not salicylic acid. Produces exclusively the O-methyl ester. The protein is Anthranilate O-methyltransferase 1 (AAMT1) of Zea mays (Maize).